Here is a 690-residue protein sequence, read N- to C-terminus: Probable tape measure protein (690 aa).

Belongs to the Mulikevirus tape measure protein family.

Its subcellular location is the host cytoplasm. In terms of biological role, serves as a base for tail tube protein polymerization and acts as a template for tail length determination. Might remain in the tube and be ejected from the tail prior to the DNA during DNA ejection (Potential). This Enterobacteriaceae (Bacteriophage Mu) protein is Probable tape measure protein.